Consider the following 280-residue polypeptide: L-proline cis-4-hydroxylase (280 aa).

The Fe cation site is built by H106, D108, and H154. R164 is a binding site for 2-oxoglutarate.

It belongs to the L-proline cis-4-/cis-3-hydroxylase family. Fe(2+) is required as a cofactor.

It catalyses the reaction L-proline + 2-oxoglutarate + O2 = cis-4-hydroxy-L-proline + succinate + CO2. Inhibited by metal ions such as Co(2+), Zn(2+), Cu(2+) or Ni(2+). Is also inhibited by EDTA or diethylpyrocarbonate (DEPC) in vitro. Unlike the procollagen-proline cis-3- and trans-4-hydroxylases from mammals, does not necessarily require L-ascorbate for activity although it does increase the activity of the enzyme. Dioxygenase that catalyzes the 2-oxoglutarate-dependent selective hydroxylation of free L-proline to cis-4-hydroxy-L-proline (cis-4-Hyp). This is L-proline cis-4-hydroxylase from Mesorhizobium japonicum (strain LMG 29417 / CECT 9101 / MAFF 303099) (Mesorhizobium loti (strain MAFF 303099)).